The primary structure comprises 459 residues: U-box domain-containing protein 75 (459 aa).

The 75-residue stretch at 64–138 (AVPAVFICPI…AAWFSRRYTR (75 aa)) folds into the U-box domain. ARM repeat units follow at residues 188–229 (QSVT…GVPL) and 231–270 (ADAK…ILME).

As to quaternary structure, interacts with GPA1. As to expression, expressed highly in panicles at flowering time, at moderate levels in vegetative shoot apices, leaf sheaths, leaf blades, and elongating internodes, and at low levels in roots.

Its subcellular location is the cell membrane. The enzyme catalyses S-ubiquitinyl-[E2 ubiquitin-conjugating enzyme]-L-cysteine + [acceptor protein]-L-lysine = [E2 ubiquitin-conjugating enzyme]-L-cysteine + N(6)-ubiquitinyl-[acceptor protein]-L-lysine.. It functions in the pathway protein modification; protein ubiquitination. Its function is as follows. E3 ubiquitin ligase that may function as positive regulator of brassinosteroid (BR) signaling. Possesses E3 ubiquitin ligase in vitro. Acts together with the heterotrimeric G alpha subunit GPA1 at the plasma membrane to mediate a BR signaling pathway that affects plant growth and development. Does not seem to be involved in gibberellin or cytokinin responses. The protein is U-box domain-containing protein 75 of Oryza sativa subsp. japonica (Rice).